Reading from the N-terminus, the 478-residue chain is Antiviral innate immune response effector IFIT1 (478 aa).

TPR repeat units follow at residues 52–85 (VGIH…MQEE), 95–128 (LVTW…CKKL), 141–174 (IDCE…DPEN), 183–216 (ISAY…NPDN), 218–249 (YIKV…NMSS), and 251–284 (TYVF…TPTS). Tryptophan 147 is a binding site for mRNA. Glycine 190 contributes to the RNA binding site. Residues lysine 259, histidine 289, glutamine 290, and lysine 336 each coordinate RNA. 4 TPR repeats span residues 305-339 (ATKG…KPTF), 340-373 (EVAH…KPVV), 378-412 (QDIH…EQAS), and 437-470 (LESL…AADF).

The protein belongs to the IFIT family. As to quaternary structure, component of an interferon-dependent multiprotein complex, at least composed of IFIT1, IFIT2 and IFIT3. Interacts (via TPR repeats 1-4) with RPL15. Interacts with STING1/MITA; could disrupt STING1 interaction with MAVS or TBK1, acting as a negative-feedback regulator of virus-triggered signaling. Interacts with EIF3E; this could be an alternative way to inhibit translation. In terms of processing, phosphorylated. ISGylated.

The protein localises to the cytoplasm. Functionally, plays a key role in the innate immune response as part of an interferon-dependent multiprotein complex, recognizing and sequestering viral RNAs that lack host-specific 2'-O-methylation at their 5' cap. By distinguishing these RNAs from host mRNAs, inhibits their translation by competing with the translation initiation factor eIF4E. Could also prevent viral replication through its interaction with DNA replication origin-binding protein E1 of several viruses. Causes the translocation of E1 from the nucleus to the cytoplasm and can also inhibit its helicase activity in vitro. Exhibits antiviral activity against many viruses from the Flaviviridae (West Nile virus, Dengue virus, hepatitis C virus), Coronaviridae (human 229E coronavirus, SARS-CoV-2 and SARS-CoV), Poxviridae (vaccinia virus) and Togaviridae (Sindbis virus) families. This chain is Antiviral innate immune response effector IFIT1, found in Homo sapiens (Human).